We begin with the raw amino-acid sequence, 271 residues long: Putative phosphoenolpyruvate synthase regulatory protein (271 aa).

ADP is bound at residue 151 to 158 (GVSRSGKT).

This sequence belongs to the pyruvate, phosphate/water dikinase regulatory protein family. PSRP subfamily.

The enzyme catalyses [pyruvate, water dikinase] + ADP = [pyruvate, water dikinase]-phosphate + AMP + H(+). It catalyses the reaction [pyruvate, water dikinase]-phosphate + phosphate + H(+) = [pyruvate, water dikinase] + diphosphate. In terms of biological role, bifunctional serine/threonine kinase and phosphorylase involved in the regulation of the phosphoenolpyruvate synthase (PEPS) by catalyzing its phosphorylation/dephosphorylation. This chain is Putative phosphoenolpyruvate synthase regulatory protein, found in Paraburkholderia xenovorans (strain LB400).